The sequence spans 110 residues: Competence pilus inhibition repressor (110 aa).

The 55-residue stretch at 7–61 folds into the HTH cro/C1-type domain; it reads VRFLRKRQGWTQQQLADFSHTSKSNISNLENGNQGYSPAILEYLAKAFNCSVSQI. A DNA-binding region (H-T-H motif) is located at residues 18–37; the sequence is QQQLADFSHTSKSNISNLEN.

Functionally, represses transcription of the PilB-specific inhibitory protein CpiA. This is Competence pilus inhibition repressor from Acinetobacter baylyi (strain ATCC 33305 / BD413 / ADP1).